A 195-amino-acid chain; its full sequence is Orotate phosphoribosyltransferase (195 aa).

Residue 117–125 participates in 5-phospho-alpha-D-ribose 1-diphosphate binding; that stretch reads EDITTTGGS. Residues Thr121 and Arg149 each coordinate orotate.

Belongs to the purine/pyrimidine phosphoribosyltransferase family. PyrE subfamily. In terms of assembly, homodimer. It depends on Mg(2+) as a cofactor.

The enzyme catalyses orotidine 5'-phosphate + diphosphate = orotate + 5-phospho-alpha-D-ribose 1-diphosphate. Its pathway is pyrimidine metabolism; UMP biosynthesis via de novo pathway; UMP from orotate: step 1/2. Catalyzes the transfer of a ribosyl phosphate group from 5-phosphoribose 1-diphosphate to orotate, leading to the formation of orotidine monophosphate (OMP). The sequence is that of Orotate phosphoribosyltransferase from Acidithiobacillus ferrooxidans (strain ATCC 53993 / BNL-5-31) (Leptospirillum ferrooxidans (ATCC 53993)).